We begin with the raw amino-acid sequence, 335 residues long: Ornithine carbamoyltransferase (335 aa).

Residues 56–59 (STRT), Gln-83, Arg-107, and 134–137 (HPTQ) contribute to the carbamoyl phosphate site. L-ornithine is bound by residues Asn-168, Asp-232, and 236–237 (SM). Carbamoyl phosphate is bound by residues 274 to 275 (CL) and Arg-320.

It belongs to the aspartate/ornithine carbamoyltransferase superfamily. OTCase family.

Its subcellular location is the cytoplasm. The enzyme catalyses carbamoyl phosphate + L-ornithine = L-citrulline + phosphate + H(+). It participates in amino-acid biosynthesis; L-arginine biosynthesis; L-arginine from L-ornithine and carbamoyl phosphate: step 1/3. Its function is as follows. Reversibly catalyzes the transfer of the carbamoyl group from carbamoyl phosphate (CP) to the N(epsilon) atom of ornithine (ORN) to produce L-citrulline. This is Ornithine carbamoyltransferase from Yersinia pseudotuberculosis serotype I (strain IP32953).